Reading from the N-terminus, the 418-residue chain is NADH-quinone oxidoreductase subunit D (418 aa).

It belongs to the complex I 49 kDa subunit family. NDH-1 is composed of 14 different subunits. Subunits NuoB, C, D, E, F, and G constitute the peripheral sector of the complex.

The protein resides in the cell inner membrane. It catalyses the reaction a quinone + NADH + 5 H(+)(in) = a quinol + NAD(+) + 4 H(+)(out). Functionally, NDH-1 shuttles electrons from NADH, via FMN and iron-sulfur (Fe-S) centers, to quinones in the respiratory chain. The immediate electron acceptor for the enzyme in this species is believed to be ubiquinone. Couples the redox reaction to proton translocation (for every two electrons transferred, four hydrogen ions are translocated across the cytoplasmic membrane), and thus conserves the redox energy in a proton gradient. This is NADH-quinone oxidoreductase subunit D from Neisseria meningitidis serogroup C (strain 053442).